We begin with the raw amino-acid sequence, 396 residues long: Acetate kinase (396 aa).

N6 provides a ligand contact to Mg(2+). K13 provides a ligand contact to ATP. R89 contacts substrate. Residue D145 is the Proton donor/acceptor of the active site. ATP-binding positions include 205-209, 280-282, and 329-333; these read HLGNG, DMR, and GVGEN. E383 contributes to the Mg(2+) binding site.

This sequence belongs to the acetokinase family. As to quaternary structure, homodimer. Requires Mg(2+) as cofactor. The cofactor is Mn(2+).

It localises to the cytoplasm. It carries out the reaction acetate + ATP = acetyl phosphate + ADP. It participates in metabolic intermediate biosynthesis; acetyl-CoA biosynthesis; acetyl-CoA from acetate: step 1/2. Catalyzes the formation of acetyl phosphate from acetate and ATP. Can also catalyze the reverse reaction. This is Acetate kinase from Mesoplasma florum (strain ATCC 33453 / NBRC 100688 / NCTC 11704 / L1) (Acholeplasma florum).